We begin with the raw amino-acid sequence, 474 residues long: Eukaryotic translation initiation factor 3 subunit L (474 aa).

The PCI domain maps to 255–449 (DAIRMFSHIL…DLDYALQGDL (195 aa)).

This sequence belongs to the eIF-3 subunit L family. In terms of assembly, component of the eukaryotic translation initiation factor 3 (eIF-3) complex.

The protein resides in the cytoplasm. In terms of biological role, component of the eukaryotic translation initiation factor 3 (eIF-3) complex, which is involved in protein synthesis of a specialized repertoire of mRNAs and, together with other initiation factors, stimulates binding of mRNA and methionyl-tRNAi to the 40S ribosome. The eIF-3 complex specifically targets and initiates translation of a subset of mRNAs involved in cell proliferation. This Neurospora crassa (strain ATCC 24698 / 74-OR23-1A / CBS 708.71 / DSM 1257 / FGSC 987) protein is Eukaryotic translation initiation factor 3 subunit L.